The sequence spans 150 residues: MARKDDLYQLLKPVVEGMGCDFWGMDYIAQGKRSLLRIYIDKESGVLVDDCEKVSRQISAILDVEDPIKGEYTLEVSSPGWDRPLFNVEQYKAYIGSIIEVRLQAPFNGRRKFKGLLAAVENDEIVLQVDAEEFIFPVETIDKANVVPQY.

Belongs to the RimP family.

The protein localises to the cytoplasm. In terms of biological role, required for maturation of 30S ribosomal subunits. The sequence is that of Ribosome maturation factor RimP from Hahella chejuensis (strain KCTC 2396).